The sequence spans 564 residues: Ell-associated factor Eaf (564 aa).

Disordered regions lie at residues 179-255 (SGPG…MITD) and 270-564 (QANI…DDDD). The segment covering 186 to 205 (ENSTMRVSSKTKVSTGSRRN) has biased composition (polar residues). Ser215 carries the post-translational modification Phosphoserine. The segment covering 274-283 (SGSSTGSSSG) has biased composition (low complexity). The span at 297 to 309 (GKQRQAHGKRQQI) shows a compositional bias: basic residues. Composition is skewed to low complexity over residues 315 to 329 (PPVQ…QQQP), 343 to 387 (QQQQ…QQRP), and 409 to 420 (ASQSVAQAAAVL). The segment covering 438–453 (DSSDSDSGSDSDDSTE) has biased composition (acidic residues). Composition is skewed to low complexity over residues 463-505 (EQQQ…NQLP), 523-533 (QQPQPQPQQQQ), and 546-564 (NDLL…DDDD).

Belongs to the EAF family.

The protein localises to the nucleus. Promotes transcriptional elongation by Su(Tpl)/ELL. Essential for development. The sequence is that of Ell-associated factor Eaf from Drosophila pseudoobscura pseudoobscura (Fruit fly).